The primary structure comprises 39 residues: Glutenin, high molecular weight subunit PC237 (39 aa).

Belongs to the gliadin/glutenin family. As to quaternary structure, disulfide-bridge linked aggregates.

Glutenins are high-molecular weight seed storage proteins of wheat endosperm. Thought to be responsible for the visco-elastic property of wheat dough. This chain is Glutenin, high molecular weight subunit PC237, found in Triticum aestivum (Wheat).